The sequence spans 671 residues: Probable potassium transport system protein Kup (671 aa).

The interval 1-43 (MSQIPSPNDPASTGAAPSSAAVPAGPSATPAPSPTAGFSLPGH) is disordered. Residues 10–37 (PASTGAAPSSAAVPAGPSATPAPSPTAG) are compositionally biased toward low complexity. A run of 12 helical transmembrane segments spans residues 52-72 (LAALAVGALGVVYGDIGTSPL), 92-112 (VLGVLSLVFWAMTFVVTFKYM), 147-167 (LMLGLFGAALLYGDGIITPAI), 181-201 (PAMERAVVPATVVILVFLFLF), 209-229 (VGAVFGPVMLVWFATIAVLGV), 255-275 (GWHGFLVLGGVVLVITGGEAL), 291-311 (WLGLAMPALLLNYLGQGALLL), 323-343 (LLAPEWALYPTIAIATAAAIV), 381-401 (IYLPEVNWMLGTACLALVLGF), 407-427 (LASAYGIAVTGTMIVTTLLFH), 441-461 (AWPLTSLFLTVDASFFLANVV), and 465-485 (DGGWFPIAAAALVFTLMSTWK).

Belongs to the HAK/KUP transporter (TC 2.A.72) family.

The protein resides in the cell inner membrane. It carries out the reaction K(+)(in) + H(+)(in) = K(+)(out) + H(+)(out). In terms of biological role, transport of potassium into the cell. Likely operates as a K(+):H(+) symporter. The chain is Probable potassium transport system protein Kup from Anaeromyxobacter sp. (strain K).